The primary structure comprises 901 residues: Protein translocase subunit SecA (901 aa).

ATP-binding positions include Gln87, 105–109, and Asp512; that span reads GEGKT. Positions 868 to 901 are disordered; the sequence is AALAAQTGERKVGRNDPCPCGSGKKYKQCHGRLQ. 4 residues coordinate Zn(2+): Cys885, Cys887, Cys896, and His897. The span at 891-901 shows a compositional bias: basic residues; that stretch reads KKYKQCHGRLQ.

The protein belongs to the SecA family. Monomer and homodimer. Part of the essential Sec protein translocation apparatus which comprises SecA, SecYEG and auxiliary proteins SecDF-YajC and YidC. Requires Zn(2+) as cofactor.

It is found in the cell inner membrane. It localises to the cytoplasm. It catalyses the reaction ATP + H2O + cellular proteinSide 1 = ADP + phosphate + cellular proteinSide 2.. Its function is as follows. Part of the Sec protein translocase complex. Interacts with the SecYEG preprotein conducting channel. Has a central role in coupling the hydrolysis of ATP to the transfer of proteins into and across the cell membrane, serving both as a receptor for the preprotein-SecB complex and as an ATP-driven molecular motor driving the stepwise translocation of polypeptide chains across the membrane. This chain is Protein translocase subunit SecA, found in Escherichia coli O45:K1 (strain S88 / ExPEC).